The sequence spans 958 residues: Importin-13 (958 aa).

20 HEAT repeats span residues 19–49, 51–83, 90–130, 137–174, 189–226, 231–263, 271–320, 325–367, 370–433, 435–471, 482–517, 519–553, 557–595, 598–643, 671–711, 715–749, 756–798, 810–840, 855–888, and 892–926; these read ENVE…QAQV, PQAW…RSPA, PDQY…LSMM, AVAD…EFQT, LAQE…SWVQ, LMDC…NAIS, VNTL…ALLD, WQSF…DDIL, EPDK…YEML, AELL…FQSI, VVPG…WLAD, PVMI…CREC, LPPY…LLSA, VEEI…SNLF, PVVV…VKTL, FAPM…VHIF, FPPI…ALKR, VKAL…TELL, ENGK…FALN, and FSYL…QQIL. The 67-residue stretch at 40–106 folds into the Importin N-terminal domain; that stretch reads AQKWLMQAQV…KSQLFTHITR (67 aa).

This sequence belongs to the importin beta family.

The protein resides in the cytoplasm. It localises to the nucleus. Its function is as follows. Functions in nuclear protein import as nuclear transport receptor. Serves as receptor for nuclear localization signals (NLS) in cargo substrates. Is thought to mediate docking of the importin/substrate complex to the nuclear pore complex (NPC) through binding to nucleoporin and the complex is subsequently translocated through the pore by an energy requiring, Ran-dependent mechanism. At the nucleoplasmic side of the NPC, Ran binds to the importin, the importin/substrate complex dissociates and importin is re-exported from the nucleus to the cytoplasm where GTP hydrolysis releases Ran. The directionality of nuclear import is thought to be conferred by an asymmetric distribution of the GTP- and GDP-bound forms of Ran between the cytoplasm and nucleus. The chain is Importin-13 (IPO13) from Gallus gallus (Chicken).